A 240-amino-acid polypeptide reads, in one-letter code: Uridylate kinase (240 aa).

ATP is bound at residue 12–15 (KLSG). Positions 20–25 (GDKGFG) are involved in allosteric activation by GTP. Position 54 (Gly-54) interacts with UMP. Residues Gly-55 and Arg-59 each contribute to the ATP site. Residues Asp-74 and 135 to 142 (TGSPYFST) each bind UMP. ATP contacts are provided by Asn-163, Tyr-169, and Asp-172.

The protein belongs to the UMP kinase family. Homohexamer.

It is found in the cytoplasm. It carries out the reaction UMP + ATP = UDP + ADP. It participates in pyrimidine metabolism; CTP biosynthesis via de novo pathway; UDP from UMP (UMPK route): step 1/1. With respect to regulation, allosterically activated by GTP. Inhibited by UTP. Its function is as follows. Catalyzes the reversible phosphorylation of UMP to UDP. The polypeptide is Uridylate kinase (Levilactobacillus brevis (strain ATCC 367 / BCRC 12310 / CIP 105137 / JCM 1170 / LMG 11437 / NCIMB 947 / NCTC 947) (Lactobacillus brevis)).